The chain runs to 94 residues: Translation initiation factor IF-1 (94 aa).

The S1-like domain maps to 1-72 (MAKEELIQFE…EKGRLIFRHK (72 aa)). Residues 71–94 (HKDERPGGTGAPRGAPPRGQFRRR) are disordered. Residues 82–94 (PRGAPPRGQFRRR) are compositionally biased toward low complexity.

This sequence belongs to the IF-1 family. Component of the 30S ribosomal translation pre-initiation complex which assembles on the 30S ribosome in the order IF-2 and IF-3, IF-1 and N-formylmethionyl-tRNA(fMet); mRNA recruitment can occur at any time during PIC assembly.

The protein localises to the cytoplasm. In terms of biological role, one of the essential components for the initiation of protein synthesis. Stabilizes the binding of IF-2 and IF-3 on the 30S subunit to which N-formylmethionyl-tRNA(fMet) subsequently binds. Helps modulate mRNA selection, yielding the 30S pre-initiation complex (PIC). Upon addition of the 50S ribosomal subunit IF-1, IF-2 and IF-3 are released leaving the mature 70S translation initiation complex. The polypeptide is Translation initiation factor IF-1 (Rhodopseudomonas palustris (strain BisB5)).